Reading from the N-terminus, the 133-residue chain is Small ribosomal subunit protein uS8 (133 aa).

Belongs to the universal ribosomal protein uS8 family. Part of the 30S ribosomal subunit. Contacts proteins S5 and S12.

In terms of biological role, one of the primary rRNA binding proteins, it binds directly to 16S rRNA central domain where it helps coordinate assembly of the platform of the 30S subunit. This chain is Small ribosomal subunit protein uS8, found in Prochlorococcus marinus (strain MIT 9312).